The chain runs to 1744 residues: Transcription initiation factor TFIID subunit 1 (1744 aa).

6 disordered regions span residues 1–65 (MNNT…EKNE), 248–275 (VSIR…APNS), 429–488 (PEDR…DNDP), 1001–1024 (QNQT…DSDN), 1071–1098 (TTNQ…SQFG), and 1186–1213 (MKKN…PPNP). Positions 43–52 (ACSSASNGGS) are enriched in polar residues. Residues 55 to 64 (VKMEPKVEKN) are compositionally biased toward basic and acidic residues. The segment covering 429-439 (PEDRRHDEGPD) has biased composition (basic and acidic residues). Positions 440-449 (HHHHHHHHRK) are enriched in basic residues. A compositionally biased stretch (polar residues) spans 477 to 488 (ESTMAQFTDNDP). Residues 1012–1024 (STDDDSTDADSDN) show a composition bias toward acidic residues. 3 coiled-coil regions span residues 1019 to 1080 (DADS…KGEK), 1161 to 1204 (YAQM…TEKK), and 1282 to 1314 (NFAE…RQMA). Basic and acidic residues-rich tracts occupy residues 1076–1093 (EKGE…EKKS) and 1186–1205 (MKKN…EKKV). Positions 1319-1344 (YGGGASSSGGAGGGGSGIGGSTGGGI) are enriched in gly residues. The segment at 1319–1391 (YGGGASSSGG…SKRRSSMMPE (73 aa)) is disordered. Residues 1354-1363 (SQISGTSSFL) are compositionally biased toward polar residues. The segment covering 1372 to 1381 (GGNRNSSVSG) has biased composition (low complexity). The Nuclear localization signal motif lies at 1379–1386 (VSGSKRRS). Bromo domains follow at residues 1404–1512 (RARA…MIER) and 1537–1634 (YLLG…VKDQ). The span at 1666-1694 (DHMDEMEDHPTEEEEEDDDDEIMDDDMDI) shows a compositional bias: acidic residues. Disordered stretches follow at residues 1666-1702 (DHMD…YSYD) and 1714-1744 (NDLA…LDSF).

It belongs to the TAF1 family. Component of the TFIID basal transcription factor complex, composed of TATA-box-binding protein tbp-1, and a number of TBP-associated factors (TAFs).

It is found in the nucleus. Functionally, the TFIID basal transcription factor complex plays a major role in the initiation of RNA polymerase II (Pol II)-dependent transcription. TFIID recognizes and binds promoters via its subunit tbp-1, a TATA-box-binding protein, and promotes assembly of the pre-initiation complex (PIC). The TFIID complex consists of tbp-1 and TBP-associated factors (TAFs), including taf-1. May regulate RNA polymerase II activity and thereby may control transcription initiation by RNA polymerase II. Required for early embryonic development. Essential for embryonic transcription of several genes. The polypeptide is Transcription initiation factor TFIID subunit 1 (Caenorhabditis elegans).